The following is a 209-amino-acid chain: MTKGILGKKLGMTQVFGPNGTATAVTVIEVGSNVVLQKKDVETDGYEAIQIGFEDKKEQRANKPEKGHAAKANTAPKRFIREIRGVNLADYEVGQELKADIFAEGEMVDVAGVSKGKGFQGAIKRHNQSRGPMAHGSRYHRGPGSMGAVAPNRVFKGQTLPGQMGGDNVTIQNLEVIKVDTERNLVLVKGSVPGPKNSCVLVSTAVKKN.

This sequence belongs to the universal ribosomal protein uL3 family. As to quaternary structure, part of the 50S ribosomal subunit. Forms a cluster with proteins L14 and L19.

Its function is as follows. One of the primary rRNA binding proteins, it binds directly near the 3'-end of the 23S rRNA, where it nucleates assembly of the 50S subunit. This chain is Large ribosomal subunit protein uL3, found in Brevibacillus brevis (strain 47 / JCM 6285 / NBRC 100599).